Reading from the N-terminus, the 404-residue chain is Glucose-1-phosphate adenylyltransferase (404 aa).

Residues tyrosine 99, glycine 164, 179-180 (EK), and serine 197 each bind alpha-D-glucose 1-phosphate.

This sequence belongs to the bacterial/plant glucose-1-phosphate adenylyltransferase family.

The enzyme catalyses alpha-D-glucose 1-phosphate + ATP + H(+) = ADP-alpha-D-glucose + diphosphate. Its pathway is capsule biogenesis; capsule polysaccharide biosynthesis. The protein operates within glycan biosynthesis; glycogen biosynthesis. Involved in the biosynthesis of ADP-glucose, a building block, required in the biosynthesis of maltose-1-phosphate (M1P) and in the elongation reactions to produce linear alpha-1,4-glucans. Catalyzes the reaction between ATP and alpha-D-glucose 1-phosphate (G1P) to produce pyrophosphate and ADP-Glc. This Mycobacteroides abscessus (strain ATCC 19977 / DSM 44196 / CCUG 20993 / CIP 104536 / JCM 13569 / NCTC 13031 / TMC 1543 / L948) (Mycobacterium abscessus) protein is Glucose-1-phosphate adenylyltransferase.